The sequence spans 2339 residues: Inverse autotransporter adhesin YeeJ (2339 aa).

Residues 1–26 (MGIKLRRLTAGICLITQLAFPMAAAA) form the signal peptide. Positions 50–98 (VPYTLGALESAQSVAERFGISVAELRKLNQFRTFARGFDNVRQGDELDV) constitute a LysM domain. Residues 125–400 (TSQQIGSLLA…SRYDLVDRNN (276 aa)) form an inverse autotransporter region. Residues 513-605 (QKDSSVSLST…GVDAAKAPAV (93 aa)) form an invasin 3 domain region. 13 consecutive Big-1 domains span residues 721–815 (IATL…VSFV), 822–913 (QVDL…VNFI), 920–1017 (ALTL…MTFV), 1024–1121 (VVVL…VTFV), 1128–1221 (QVVL…VHFI), 1229–1331 (IIEL…SINV), 1339–1432 (HLTL…VTYV), 1439–1535 (EITL…VNFI), 1542–1639 (QVNL…VTLI), 1646–1730 (KLAS…PTEV), 1746–1837 (ITSL…LEAI), 1840–1934 (KLTL…VKVT), and 1942–2034 (VASF…ITLV). The C-type lectin domain stretch occupies residues 2236–2339 (KSWWVNAGEA…FAYATCYKNL (104 aa)).

The protein belongs to the intimin/invasin family.

The protein resides in the cell outer membrane. Its function is as follows. A cryptic inverse autotransporter, it is not expressed in wild-type strain MG1655. Upon overexpression shows increased adherence to polyvinyl chloride (PVC) plates and increased mature biofilm formation. Probably binds peptidoglycan. The protein is Inverse autotransporter adhesin YeeJ (yeeJ) of Escherichia coli (strain K12).